Here is a 322-residue protein sequence, read N- to C-terminus: MARDKIALIGSGQIGGTLAHMIGLKELGDVVLFDIAEGVPQGKALDIAESSPVDGFDANFTGANSYEAIEGASVVIVTAGVPRKPGMSRDDLLSINLKVMEQVGAGIKKYAPDAFVICITNPLDAMVWALQKASGMPAKKVVGMAGVLDSARFRYFLADEFNVSVEDVTAFVLGGHGDTMVPLVKYSTVAGIPLPDLVKMGWTSQARLDEIVDRTRNGGAEIVNLLKTGSAFYAPAASAIAMAESYLRDKKRVLPVAAYLNGEYGVKDMYVGVPVVIGAKGVERIVEIEMAGKDREAFDKSVGAVQGLVDACKKIAPDLLGR.

NAD(+) is bound by residues 10 to 15 (GSGQIG) and Asp-34. 2 residues coordinate substrate: Arg-83 and Arg-89. NAD(+) is bound by residues Asn-96 and 119–121 (ITN). The substrate site is built by Asn-121 and Arg-152. His-176 (proton acceptor) is an active-site residue.

Belongs to the LDH/MDH superfamily. MDH type 3 family.

It catalyses the reaction (S)-malate + NAD(+) = oxaloacetate + NADH + H(+). Its function is as follows. Catalyzes the reversible oxidation of malate to oxaloacetate. This chain is Malate dehydrogenase, found in Rhodopseudomonas palustris (strain HaA2).